The chain runs to 499 residues: Cytochrome P450 81Q32 (499 aa).

Residues 5–25 traverse the membrane as a helical segment; that stretch reads TLLYTFLAVVLLSISLKLFPV. N-linked (GlcNAc...) asparagine glycans are attached at residues asparagine 112, asparagine 183, and asparagine 266. Cysteine 434 contributes to the heme binding site.

It belongs to the cytochrome P450 family. In terms of tissue distribution, expressed in leaf epidermis and in the leaf internal phloem-associated parenchyma (IPAP) inside the mesophyll.

The protein resides in the membrane. This is Cytochrome P450 81Q32 from Catharanthus roseus (Madagascar periwinkle).